The chain runs to 165 residues: UPF0303 protein BamMC406_1480 (165 aa).

This sequence belongs to the UPF0303 family.

This chain is UPF0303 protein BamMC406_1480, found in Burkholderia ambifaria (strain MC40-6).